Reading from the N-terminus, the 389-residue chain is Allantoicase (389 aa).

Belongs to the allantoicase family.

The catalysed reaction is allantoate + H2O = (S)-ureidoglycolate + urea. Its pathway is nitrogen metabolism; (S)-allantoin degradation; (S)-ureidoglycolate from allantoate (aminidohydrolase route): step 1/1. Its function is as follows. Utilization of purines as secondary nitrogen sources, when primary sources are limiting. This is Allantoicase (allc) from Xenopus tropicalis (Western clawed frog).